A 165-amino-acid polypeptide reads, in one-letter code: Phosphopantetheine adenylyltransferase (165 aa).

Thr-10 lines the substrate pocket. ATP is bound by residues 10–11 (TF) and His-18. Lys-42, Leu-75, and Arg-89 together coordinate substrate. Residues 90 to 92 (GVR), Glu-100, and 125 to 131 (VSFISSS) contribute to the ATP site.

Belongs to the bacterial CoaD family. In terms of assembly, homohexamer. Mg(2+) serves as cofactor.

It is found in the cytoplasm. The catalysed reaction is (R)-4'-phosphopantetheine + ATP + H(+) = 3'-dephospho-CoA + diphosphate. Its pathway is cofactor biosynthesis; coenzyme A biosynthesis; CoA from (R)-pantothenate: step 4/5. Reversibly transfers an adenylyl group from ATP to 4'-phosphopantetheine, yielding dephospho-CoA (dPCoA) and pyrophosphate. The polypeptide is Phosphopantetheine adenylyltransferase (Buchnera aphidicola subsp. Schizaphis graminum (strain Sg)).